Reading from the N-terminus, the 185-residue chain is Urease accessory protein UreE (185 aa).

Positions 153–185 (LRANSAQGHGHSHSHSHDHHGYHHHGDGNWHKH) are disordered. A compositionally biased stretch (basic residues) spans 162 to 175 (GHSHSHSHDHHGYH). Basic and acidic residues predominate over residues 176-185 (HHGDGNWHKH).

This sequence belongs to the UreE family.

Its subcellular location is the cytoplasm. In terms of biological role, involved in urease metallocenter assembly. Binds nickel. Probably functions as a nickel donor during metallocenter assembly. This Haemophilus influenzae (strain PittGG) protein is Urease accessory protein UreE.